The following is a 117-amino-acid chain: Protein Wnt-6 (117 aa).

The O-palmitoleoyl serine; by PORCN moiety is linked to residue serine 1. Residues cysteine 83 and cysteine 98 are joined by a disulfide bond. N-linked (GlcNAc...) asparagine glycosylation occurs at asparagine 84.

The protein belongs to the Wnt family. Post-translationally, palmitoleoylation is required for efficient binding to frizzled receptors. Depalmitoleoylation leads to Wnt signaling pathway inhibition.

The protein localises to the secreted. Its subcellular location is the extracellular space. It is found in the extracellular matrix. Functionally, ligand for members of the frizzled family of seven transmembrane receptors. Probable developmental protein. May be a signaling molecule which affects the development of discrete regions of tissues. Is likely to signal over only few cell diameters. The chain is Protein Wnt-6 (WNT-6) from Strongylocentrotus purpuratus (Purple sea urchin).